Reading from the N-terminus, the 400-residue chain is Protein phyllopod (400 aa).

An interaction with sina region spans residues 109–127 (QERTKLRPVAMVRPTVRVQ). The segment at 125–145 (RVQPQSQPQLQPQVPINPTPA) is disordered. Low complexity predominate over residues 127-138 (QPQSQPQLQPQV). Residues 241-320 (YQRFPQPSVD…TAISEVLPTA (80 aa)) form an interaction with ttk region. Positions 319–362 (TARYQVTHEENKENQQAQEMELELEEEEEVDGRAELEVVQEAEA) form a coiled coil. Residues 346-382 (EEVDGRAELEVVQEAEAPLEPQSHHKQGNSHQNSHQA) form a disordered region.

As to quaternary structure, component of some E3 complex at least composed of sina, ebi and phyl, required for the degradation of ttk. In terms of tissue distribution, in embryos, it is ubiquitously present before cellularization. During stages 9-11, it is expressed in neuroblasts and the SOP cells. From stage 12 onward, it decreases, but remains in a subset of PNS cells at stages 12-14. Weakly expressed in wing imaginal disks, in the SOP cells of wing margin bristles, notal macrochaetes, and other sensory organs. In leg disks, it is expressed in the precursors of the femoral chordotonal organs, as well as in external sensory SOP cells. Strongly expressed in the eye-antenna disk, it is specifically expressed in R1, R6 and R7 cells, and not in R3, R3, R4, R5 and R8 cells.

The protein localises to the nucleus. Essential adapter component of E3 ubiquitin ligase complexes; involved in R7 photoreceptor cell differentiation, embryonic nervous system, external sensory organ development and specification of particular muscles. E3 ubiquitin ligase complexes mediate ubiquitination and subsequent proteasomal degradation of target proteins. Required for specification of R7 photoreceptor cell fate in the eye by participating in the ubiquitination and subsequent proteasomal degradation of Tramtrack (ttk), a general inhibitor of photoreceptor differentiation. Acts downstream of Notch signaling to specify the fate of the SOP (sensory organ precursor) cells and their progeny, probably via the sina-mediated proteasomal degradation of ttk. Its restricted pattern of expression, upon Notch and Ras signaling pathways, suggests that it acts as a key determinant in E3 complexes to trigger protein proteolysis in appropriate cells. The polypeptide is Protein phyllopod (phyl) (Drosophila melanogaster (Fruit fly)).